Here is a 418-residue protein sequence, read N- to C-terminus: UDP-N-acetylglucosamine 1-carboxyvinyltransferase (418 aa).

23-24 (KN) contacts phosphoenolpyruvate. UDP-N-acetyl-alpha-D-glucosamine is bound at residue Arg93. Residue Asp117 is the Proton donor of the active site. Residues Asp305 and Ile327 each contribute to the UDP-N-acetyl-alpha-D-glucosamine site.

This sequence belongs to the EPSP synthase family. MurA subfamily.

Its subcellular location is the cytoplasm. The catalysed reaction is phosphoenolpyruvate + UDP-N-acetyl-alpha-D-glucosamine = UDP-N-acetyl-3-O-(1-carboxyvinyl)-alpha-D-glucosamine + phosphate. It participates in cell wall biogenesis; peptidoglycan biosynthesis. In terms of biological role, cell wall formation. Adds enolpyruvyl to UDP-N-acetylglucosamine. The protein is UDP-N-acetylglucosamine 1-carboxyvinyltransferase of Corynebacterium jeikeium (strain K411).